Here is a 747-residue protein sequence, read N- to C-terminus: AT-rich interactive domain-containing protein 4 (747 aa).

The segment at 454–475 is disordered; the sequence is PLPTRKRSEPCRESKEIENGGP. Over residues 459–471 the composition is skewed to basic and acidic residues; that stretch reads KRSEPCRESKEIE. The ARID domain occupies 566–670; that stretch reads VCSEEEFLRD…YLLEYEYAHD (105 aa). A PHD-type zinc finger spans residues 674–730; that stretch reads GECCLICRSSTAGDWVNCGSCGEWAHFGCDRRPGLGAFKDYAKTDGLEYVCPNCSVS.

It is found in the nucleus. The sequence is that of AT-rich interactive domain-containing protein 4 (ARID4) from Arabidopsis thaliana (Mouse-ear cress).